We begin with the raw amino-acid sequence, 264 residues long: MKQYLDLLQHVMENGSDRGDRTGTGTRSVFGYQMRFDLAQGFPVLTTKKLHLRSIIHELLWFLKGDTNIAYLKENGVSIWDEWADENGDLGPVYGAQWRSWPKPGGGHIDQIANLVESIKTNPNSRRHIVSAWNPAEVDEMALPPCHCLFQFYVADGKLSCQLYQRSADIFLGVPFNIASYALLTMMVAQVTGLKAGDFIHTLGDAHLYANHFEQARLQLTRQPKPLPVMRINPDVKDVFGFAFEDFSLENYSADPVIKAPIAV.

Arg-21 contacts dUMP. His-51 provides a ligand contact to (6R)-5,10-methylene-5,6,7,8-tetrahydrofolate. 126–127 (RR) serves as a coordination point for dUMP. Cys-146 serves as the catalytic Nucleophile. Residues 166–169 (RSAD), Asn-177, and 207–209 (HLY) contribute to the dUMP site. Asp-169 is a binding site for (6R)-5,10-methylene-5,6,7,8-tetrahydrofolate. Ala-263 contacts (6R)-5,10-methylene-5,6,7,8-tetrahydrofolate.

This sequence belongs to the thymidylate synthase family. Bacterial-type ThyA subfamily. As to quaternary structure, homodimer.

Its subcellular location is the cytoplasm. The catalysed reaction is dUMP + (6R)-5,10-methylene-5,6,7,8-tetrahydrofolate = 7,8-dihydrofolate + dTMP. The protein operates within pyrimidine metabolism; dTTP biosynthesis. Its function is as follows. Catalyzes the reductive methylation of 2'-deoxyuridine-5'-monophosphate (dUMP) to 2'-deoxythymidine-5'-monophosphate (dTMP) while utilizing 5,10-methylenetetrahydrofolate (mTHF) as the methyl donor and reductant in the reaction, yielding dihydrofolate (DHF) as a by-product. This enzymatic reaction provides an intracellular de novo source of dTMP, an essential precursor for DNA biosynthesis. The polypeptide is Thymidylate synthase (Allorhizobium ampelinum (strain ATCC BAA-846 / DSM 112012 / S4) (Agrobacterium vitis (strain S4))).